The primary structure comprises 232 residues: Phosphate-specific transport system accessory protein PhoU homolog 1 (232 aa).

The protein belongs to the PhoU family. In terms of assembly, homodimer.

It localises to the cytoplasm. Its function is as follows. Plays a role in the regulation of phosphate uptake. In Thermotoga maritima (strain ATCC 43589 / DSM 3109 / JCM 10099 / NBRC 100826 / MSB8), this protein is Phosphate-specific transport system accessory protein PhoU homolog 1 (phoU1).